The following is a 262-amino-acid chain: Acyl-[acyl-carrier-protein]--UDP-N-acetylglucosamine O-acyltransferase (262 aa).

It belongs to the transferase hexapeptide repeat family. LpxA subfamily. In terms of assembly, homotrimer.

The protein resides in the cytoplasm. It carries out the reaction a (3R)-hydroxyacyl-[ACP] + UDP-N-acetyl-alpha-D-glucosamine = a UDP-3-O-[(3R)-3-hydroxyacyl]-N-acetyl-alpha-D-glucosamine + holo-[ACP]. Its pathway is glycolipid biosynthesis; lipid IV(A) biosynthesis; lipid IV(A) from (3R)-3-hydroxytetradecanoyl-[acyl-carrier-protein] and UDP-N-acetyl-alpha-D-glucosamine: step 1/6. Functionally, involved in the biosynthesis of lipid A, a phosphorylated glycolipid that anchors the lipopolysaccharide to the outer membrane of the cell. This Histophilus somni (strain 2336) (Haemophilus somnus) protein is Acyl-[acyl-carrier-protein]--UDP-N-acetylglucosamine O-acyltransferase.